The chain runs to 156 residues: RNA polymerase sigma factor SigS (156 aa).

Positions glutamate 29–isoleucine 44 match the Polymerase core binding motif. Positions glutamine 126–methionine 145 form a DNA-binding region, H-T-H motif.

It belongs to the sigma-70 factor family.

In terms of biological role, sigma factors are initiation factors that promote the attachment of RNA polymerase to specific initiation sites and are then released. Sigma-S contributes to the protection against external stress, thus playing a role in cellular fitness and survival. The polypeptide is RNA polymerase sigma factor SigS (sigS) (Staphylococcus aureus (strain Mu50 / ATCC 700699)).